The primary structure comprises 300 residues: Acetaldehyde dehydrogenase (300 aa).

An NAD(+)-binding site is contributed by 10 to 13; that stretch reads SGNI. Catalysis depends on Cys129, which acts as the Acyl-thioester intermediate. Residues 160–168 and Asn271 contribute to the NAD(+) site; that span reads SAGPGTRKN.

Belongs to the acetaldehyde dehydrogenase family.

It catalyses the reaction acetaldehyde + NAD(+) + CoA = acetyl-CoA + NADH + H(+). This Alkalilimnicola ehrlichii (strain ATCC BAA-1101 / DSM 17681 / MLHE-1) protein is Acetaldehyde dehydrogenase.